The primary structure comprises 467 residues: L-seryl-tRNA(Sec) selenium transferase (467 aa).

Residue K298 is modified to N6-(pyridoxal phosphate)lysine.

It belongs to the SelA family. Pyridoxal 5'-phosphate is required as a cofactor.

It is found in the cytoplasm. It carries out the reaction L-seryl-tRNA(Sec) + selenophosphate + H(+) = L-selenocysteinyl-tRNA(Sec) + phosphate. The protein operates within aminoacyl-tRNA biosynthesis; selenocysteinyl-tRNA(Sec) biosynthesis; selenocysteinyl-tRNA(Sec) from L-seryl-tRNA(Sec) (bacterial route): step 1/1. Functionally, converts seryl-tRNA(Sec) to selenocysteinyl-tRNA(Sec) required for selenoprotein biosynthesis. The chain is L-seryl-tRNA(Sec) selenium transferase from Alkaliphilus oremlandii (strain OhILAs) (Clostridium oremlandii (strain OhILAs)).